Consider the following 258-residue polypeptide: F-box/LRR-repeat protein 25 (258 aa).

One can recognise an F-box domain in the interval 27–76 (SDSISNLPDEILHHILSFIPETNLVIRTSVLSKRWRHVWSKTPHLSFEWL). 4 LRR repeats span residues 101 to 130 (CTSY…SLAF), 136 to 161 (CNKF…SLTP), 177 to 202 (RCNL…SLKF), and 224 to 249 (RRSC…RLRD).

The chain is F-box/LRR-repeat protein 25 (FBL25) from Arabidopsis thaliana (Mouse-ear cress).